Reading from the N-terminus, the 357-residue chain is Red-sensitive opsin (357 aa).

The Extracellular portion of the chain corresponds to 1–49 (MGDQWGDAVFAARRRGDDTTREAAFTYTNSNNTKDPFEGPNYHIAPRWV). Asn-31 carries an N-linked (GlcNAc...) asparagine glycan. Residues 50–74 (YNLATCWMFFVVVASTVTNGLVLVA) traverse the membrane as a helical segment. Residues 75 to 86 (SAKFKKLRHPLN) lie on the Cytoplasmic side of the membrane. The chain crosses the membrane as a helical span at residues 87–112 (WILVNLAIADLLETLLASTISVCNQF). Residues 113–126 (FGYFILGHPMCVFE) lie on the Extracellular side of the membrane. An intrachain disulfide couples Cys-123 to Cys-200. Residues 127 to 146 (GFTVATCGIAGLWSLTVISW) form a helical membrane-spanning segment. The Cytoplasmic segment spans residues 147–165 (ERWVVVCKPFGNVKFDGKM). Residues 166 to 189 (ATAGIVFTWVWSAVWCAPPIFGWS) traverse the membrane as a helical segment. The Extracellular segment spans residues 190–215 (RYWPHGLKTSCGPDVFSGSEDPGVQS). The chain crosses the membrane as a helical span at residues 216–243 (YMIVLMITCCFIPLGIIILCYIAVWWAI). Over 244–265 (RTVAQQQKDSESTQKAEKEVSR) the chain is Cytoplasmic. The helical transmembrane segment at 266–289 (MVVVMIMAYCFCWGPYTFFACFAA) threads the bilayer. Residues 290-297 (ANPGYAFH) lie on the Extracellular side of the membrane. Residues 298–322 (PLAAAMPAYFAKSATIYNPVIYVFM) form a helical membrane-spanning segment. An N6-(retinylidene)lysine modification is found at Lys-309. Topologically, residues 323-357 (NRQFRVCIMQLFGKKVDDGSEVSTSKTEVSSVAPA) are cytoplasmic.

It belongs to the G-protein coupled receptor 1 family. Opsin subfamily. Phosphorylated on some or all of the serine and threonine residues present in the C-terminal region. The color pigments are found in the cone photoreceptor cells.

It is found in the membrane. Its function is as follows. Visual pigments are the light-absorbing molecules that mediate vision. They consist of an apoprotein, opsin, covalently linked to cis-retinal. This is Red-sensitive opsin (R007) from Psalidodon fasciatus (Banded astyanax).